We begin with the raw amino-acid sequence, 463 residues long: Dopaminechrome tautomerase (463 aa).

It belongs to the major royal jelly protein family.

Its subcellular location is the secreted. The catalysed reaction is dopaminechrome = 5,6-dihydroxyindole. It participates in pigment biosynthesis; melanin biosynthesis. In terms of biological role, catalyzes the conversion of dopaminechrome to 5,6-dihydroxyindole in the eumelanin biosynthetic pathway originating from dopamine. Catalyzes tautomerization of dopaminechrome to 5,6-dihydroxyindole during eumelanin biosynthesis. Acts both dopaminechrome and N-methyl dopaminechrome but not on dopachrome or other aminochromes tested. The chain is Dopaminechrome tautomerase from Drosophila melanogaster (Fruit fly).